A 989-amino-acid polypeptide reads, in one-letter code: Cation-chloride cotransporter 1 (989 aa).

Positions 1–10 (MENGEIEGAA) are enriched in acidic residues. The interval 1 to 29 (MENGEIEGAADDGVPVPAPPNGRRYRPVG) is disordered. Topologically, residues 1-132 (MENGEIEGAA…GRPKETGPKF (132 aa)) are cytoplasmic. A helical transmembrane segment spans residues 133 to 153 (GTMMGVFVPCLQNILGIIYYI). Over 154–167 (RFTWIVGMAGVWQS) the chain is Extracellular. Residues 168-188 (LVLVSFCGACTFLTGISLSAI) traverse the membrane as a helical segment. At 189 to 214 (ATNGAMKGGGPYYLIGRALGPEVGVS) the chain is on the cytoplasmic side. The helical transmembrane segment at 215–235 (IGLCFFLGNAVAGSMYVLGAV) threads the bilayer. Residues 236-280 (ETFLDAVPSAGFFKESVTVVNNTLVNGTATASTATISTPSLHDLQ) are Extracellular-facing. 2 N-linked (GlcNAc...) asparagine glycosylation sites follow: Asn256 and Asn261. The helical transmembrane segment at 281-301 (VYGVIVTILLCFIVFGGVKII) threads the bilayer. The Cytoplasmic segment spans residues 302–304 (NKV). Residues 305-325 (APAFLIPVLFSLLCIYLGVFI) traverse the membrane as a helical segment. Over 326-365 (APRHNAPKGITGLSITTFKDNWGSEYQRTNNAGVPDPNGS) the chain is Extracellular. N-linked (GlcNAc...) asparagine glycosylation occurs at Asn363. Residues 366 to 386 (IYWDFNALVGLFFPAVTGIMA) traverse the membrane as a helical segment. Residues 387–405 (GSNRSASLKDTQRSIPIGT) are Cytoplasmic-facing. The helical transmembrane segment at 406–426 (LSATLTTTAMYLFSVLLFGAL) threads the bilayer. At 427-441 (ATREELLTDRLLTAT) the chain is on the extracellular side. The helical transmembrane segment at 442-462 (VAWPAPAVIYIGIILSTLGAA) threads the bilayer. Over 463–498 (LQSLTGAPRLLAAIANDDILPVLNYFKVSEGAEPHS) the chain is Cytoplasmic. A helical membrane pass occupies residues 499-519 (ATLFTAFICICCVVIGNLDLI). At 520-522 (TPT) the chain is on the extracellular side. Residues 523 to 543 (ITMFFLLCYAGVNLSCFLLDL) form a helical membrane-spanning segment. The Cytoplasmic portion of the chain corresponds to 544–551 (LDAPSWRP). The helical transmembrane segment at 552–572 (RWKFHHWSLSLVGALLCVVIM) threads the bilayer. Over 573–578 (FLISWS) the chain is Extracellular. The chain crosses the membrane as a helical span at residues 579-599 (FTVVSLALASLIYYYVSLKGK). Over 600 to 989 (AGDWGDGFKS…YRRDVVTFFT (390 aa)) the chain is Cytoplasmic.

It belongs to the SLC12A transporter family. Expressed in roots, stems and leaves with higher expression in root and leaf tips.

The protein localises to the membrane. Functionally, probable cation/chloride cotransporter that may mediate potassium-chloride cotransport. Involved in plant development and K(+) and Cl(-) homeostasis. May not be involved in sodium-chloride cotransport. The sequence is that of Cation-chloride cotransporter 1 (CCC1) from Oryza sativa subsp. japonica (Rice).